A 147-amino-acid chain; its full sequence is MLLVGSGAKFVQQLEQCGALAIFVTPEGGSEGHYLRRLRGAGYEVVTLSSKGIGDLASYLTSSHGVRPATLGKSQRRTYFYPSLIEQYRATLPPKAKGLVFWFYEGHVLSRQELSYLVKLSQEDKGVKFVVELGRERSIRWQPLQSA.

This sequence belongs to the complex I NdhN subunit family. In terms of assembly, NDH-1 can be composed of about 15 different subunits; different subcomplexes with different compositions have been identified which probably have different functions.

It localises to the cellular thylakoid membrane. The enzyme catalyses a plastoquinone + NADH + (n+1) H(+)(in) = a plastoquinol + NAD(+) + n H(+)(out). The catalysed reaction is a plastoquinone + NADPH + (n+1) H(+)(in) = a plastoquinol + NADP(+) + n H(+)(out). Functionally, NDH-1 shuttles electrons from an unknown electron donor, via FMN and iron-sulfur (Fe-S) centers, to quinones in the respiratory and/or the photosynthetic chain. The immediate electron acceptor for the enzyme in this species is believed to be plastoquinone. Couples the redox reaction to proton translocation, and thus conserves the redox energy in a proton gradient. Cyanobacterial NDH-1 also plays a role in inorganic carbon-concentration. The polypeptide is NAD(P)H-quinone oxidoreductase subunit N (Synechococcus sp. (strain JA-3-3Ab) (Cyanobacteria bacterium Yellowstone A-Prime)).